We begin with the raw amino-acid sequence, 309 residues long: Tagatose-6-phosphate kinase (309 aa).

The protein belongs to the carbohydrate kinase PfkB family. LacC subfamily.

It carries out the reaction D-tagatofuranose 6-phosphate + ATP = D-tagatofuranose 1,6-bisphosphate + ADP + H(+). Its pathway is carbohydrate metabolism; D-tagatose 6-phosphate degradation; D-glyceraldehyde 3-phosphate and glycerone phosphate from D-tagatose 6-phosphate: step 1/2. In Streptococcus pneumoniae (strain ATCC 700669 / Spain 23F-1), this protein is Tagatose-6-phosphate kinase.